A 303-amino-acid chain; its full sequence is Caspase-7 (303 aa).

Residue methionine 1 is modified to N-acetylmethionine. Positions 1–23 are excised as a propeptide; it reads MTDDQDCAAELEKVDSSSEDGVD. Residues 1 to 26 are disordered; sequence MTDDQDCAAELEKVDSSSEDGVDAKP. Residues 10–26 are compositionally biased toward basic and acidic residues; it reads ELEKVDSSSEDGVDAKP. Position 30 is a phosphoserine (serine 30). Residues 38-41 form an exosite region; that stretch reads KKKR. The interval 76–87 is loop L1; the sequence is KNFDKATGMDVR. Histidine 144 is an active-site residue. Position 173 is a phosphothreonine (threonine 173). Cysteine 186 is a catalytic residue. The loop L2 stretch occupies residues 187–196; sequence RGTELDDGIQ. The propeptide occupies 199–206; it reads SGPINDID. Residues 226-238 are loop L3; it reads VPGYYSWRNPGKG. Serine 239 carries the post-translational modification Phosphoserine. A loop L4 region spans residues 274 to 288; it reads ESQSDDPRFNEKKQI.

It belongs to the peptidase C14A family. As to quaternary structure, heterotetramer that consists of two anti-parallel arranged heterodimers, each one formed by a 20 kDa (p20) and a 11 kDa (p11) subunit. Interacts with XIAP (via its second BIR domain); inhibiting CASP7 activity. Interacts with BIRC6/bruce. Interacts with ATXN3 (short isoform 1). Interacts with HSPA5. Cleavage by different proteases, such as granzyme B (GZMB), caspase-1 (CASP1), caspase-8 (CASP8) or caspase-9 (CASP9) generate the two active subunits. Its involvement in different programmed cell death processes is probably specified by the protease that activates CASP7. Cleaved and activated by initiator caspases (CASP8 and/or CASP9), leading to execution phase of apoptosis. Cleavage and maturation by GZMB regulates granzyme-mediated programmed cell death. Cleaved and activated by CASP1 in response to bacterial infection. Propeptide domains can also be cleaved efficiently by CASP3. Active heterodimers between the small subunit of caspase-7 and the large subunit of CASP3, and vice versa, also occur. Also cleaved at the N-terminus at alternative sites by CAPN1, leading to its activation. Post-translationally, phosphorylation at Ser-30 and Ser-239 by PAK2 inhibits its activity. Phosphorylation at Ser-30 prevents cleavage and activation by initiator caspase CASP9, while phosphorylation at Ser-239 prevents thiol protease activity by preventing substrate-binding. In terms of processing, ubiquitinated by BIRC6; this activity is inhibited by DIABLO/SMAC. Highly expressed in heart, lung, liver and kidney. Low levels in spleen, skeletal muscle and testis. No expression in the brain.

It is found in the cytoplasm. The protein resides in the cytosol. Its subcellular location is the nucleus. It localises to the secreted. The protein localises to the extracellular space. It carries out the reaction Strict requirement for an Asp residue at position P1 and has a preferred cleavage sequence of Asp-Glu-Val-Asp-|-.. With respect to regulation, during activation, the N-terminal disordered prodomain is removed by cleavage. Concomitantly, double cleavage gives rise to a large Caspase-7 subunit p20 and a small Caspase-7 subunit p11. The two large and two small subunits then assemble to form the active CASP7 complex. Can be cleaved and activated by different caspases, depending on the context. Cleaved and activated by initiator caspases (CASP8 and/or CASP9), leading to execution phase of apoptosis. Cleavage and maturation by GZMB regulates granzyme-mediated programmed cell death. Cleavage and maturation by CASP1 regulates pyroptosis. Inhibited by XIAP, which directly binds to the active site pocket and obstructs substrate entry. Phosphorylation at Ser-30 and Ser-239 by PAK2 inhibits its activity. Inhibited by BIRC6; following inhibition of BIRC6-caspase binding by DIABLO/SMAC, BIRC6 is subjected to caspase cleavage, leading to an increase in active caspases. In terms of biological role, thiol protease involved in different programmed cell death processes, such as apoptosis, pyroptosis or granzyme-mediated programmed cell death, by proteolytically cleaving target proteins. Has a marked preference for Asp-Glu-Val-Asp (DEVD) consensus sequences, with some plasticity for alternate non-canonical sequences. Its involvement in the different programmed cell death processes is probably determined by upstream proteases that activate CASP7. Acts as an effector caspase involved in the execution phase of apoptosis: following cleavage and activation by initiator caspases (CASP8 and/or CASP9), mediates execution of apoptosis by catalyzing cleavage of proteins, such as CLSPN, PARP1, PTGES3 and YY1. Compared to CASP3, acts as a minor executioner caspase and cleaves a limited set of target proteins. Acts as a key regulator of the inflammatory response in response to bacterial infection by catalyzing cleavage and activation of the sphingomyelin phosphodiesterase SMPD1 in the extracellular milieu, thereby promoting membrane repair. Regulates pyroptosis in intestinal epithelial cells: cleaved and activated by CASP1 in response to S.typhimurium infection, promoting its secretion to the extracellular milieu, where it catalyzes activation of SMPD1, generating ceramides that repair membranes and counteract the action of gasdermin-D (GSDMD) pores. Regulates granzyme-mediated programmed cell death in hepatocytes: cleaved and activated by granzyme B (GZMB) in response to bacterial infection, promoting its secretion to the extracellular milieu, where it catalyzes activation of SMPD1, generating ceramides that repair membranes and counteract the action of perforin (PRF1) pores. Following cleavage by CASP1 in response to inflammasome activation, catalyzes processing and inactivation of PARP1, alleviating the transcription repressor activity of PARP1. Acts as an inhibitor of type I interferon production during virus-induced apoptosis by mediating cleavage of antiviral proteins CGAS, IRF3 and MAVS, thereby preventing cytokine overproduction. Cleaves and activates sterol regulatory element binding proteins (SREBPs). Cleaves phospholipid scramblase proteins XKR4, XKR8 and XKR9. Cleaves BIRC6 following inhibition of BIRC6-caspase binding by DIABLO/SMAC. This chain is Caspase-7, found in Mus musculus (Mouse).